A 392-amino-acid chain; its full sequence is Tryptophan synthase beta chain (392 aa).

Lysine 86 is subject to N6-(pyridoxal phosphate)lysine.

The protein belongs to the TrpB family. As to quaternary structure, tetramer of two alpha and two beta chains. It depends on pyridoxal 5'-phosphate as a cofactor.

It catalyses the reaction (1S,2R)-1-C-(indol-3-yl)glycerol 3-phosphate + L-serine = D-glyceraldehyde 3-phosphate + L-tryptophan + H2O. Its pathway is amino-acid biosynthesis; L-tryptophan biosynthesis; L-tryptophan from chorismate: step 5/5. The beta subunit is responsible for the synthesis of L-tryptophan from indole and L-serine. This is Tryptophan synthase beta chain from Methanocorpusculum labreanum (strain ATCC 43576 / DSM 4855 / Z).